A 175-amino-acid polypeptide reads, in one-letter code: MNNLDISFNDEVNFLKDSDKDWITWISNLLLSAKKEIHKENTQEMSINFVSSKKIHEINKKYRGKDRPTDVISFAIEDGLDEDFISAFSDDPDFVEDIGDLFLCPEVIKRHSVEYETGFNREFGYTLVHGYLHLNGYDHIEDDEAKVMFGIQGKVLREYGLPLHPDQENHGKQIH.

Residues His129, His133, and His139 each coordinate Zn(2+).

The protein belongs to the endoribonuclease YbeY family. Requires Zn(2+) as cofactor.

The protein localises to the cytoplasm. Its function is as follows. Single strand-specific metallo-endoribonuclease involved in late-stage 70S ribosome quality control and in maturation of the 3' terminus of the 16S rRNA. This is Endoribonuclease YbeY from Lactobacillus johnsonii (strain CNCM I-12250 / La1 / NCC 533).